Reading from the N-terminus, the 950-residue chain is MLFSWREDPGAQCLLLSLLLLAASEVGSGQLHYSVSEEAKHGTFVGRIAQDLGLELAELVPRLFRVASKRHGDLLEVNLQNGILFVNSRIDREELCGRSAECSIHLEVIVDRPLQVFHVEVEVKDINDNAPVFPMAVKNLFISESRQPGSRFSLEGASDADIGTNSLLTYSLDSTEYFTLDVKRNDEEIKSLGLVLKKNLNREDTPKHYLLITAIDGGKPELTGTTQLKITVLDVNDNAPAFERTIYKVRLLENAPNGTLVVTVNATDLDEGVNKDIAYSFNTDMSADILSKFHLDPVNGQISVKGNIDFEESKSYEIQVEATDKGNPPMSDHCTVLLEIVDINDNVPELVIQSLSLPVLEDSPLSTVIALISVSDRDSGVNGQVTCSLTPHVPFKLVSTFKNYYSLVLDSPLDRESVSAYELVVTARDGGSPSLWATASVSVEVADVNDNAPAFSQSEYTVFVKENNPPGCHIFTVSARDADAQENALVSYSLVERRVGERALSSYVSVHAESGKVYALQPLDHEELELLQFQVSARDAGVPPLGSNVTLQVFVLDENDNAPALLMPRVGGIGGAVSELVPRSVGAGHVVAKVRAVDADSGYNAWLSYELQPGTGGARIPFRVGLYTGEISTTRALDEVDAPRHRLLVLVKDHGEPSLTATATVLVSLVESGQAPKASSQASAGATGPEAALVDVNVYLIVAICAVSSLLVLTLLLYTALRCSAPPTEGDCGPGKPTLVCSSAVGSWSYSQQRQQRVCSGEGLPKTDLMAFSPSLPPCPISRDREEKQDVDVDLSAKPRQPNPDWRYSASLRAGMHSSVHLEEAGILRAGPGGPDQQWPTVSSATPEPEAGEVSPPVGAGVNSNSWTFKYGPGNPKQSGPGELPDKFIIPGSPAIISIRQEPTNSQIDKSDFITFGKKEETKKKKKKKKGNKTQEKKEKGNSTTDNSDQ.

Positions 1 to 29 (MLFSWREDPGAQCLLLSLLLLAASEVGSG) are cleaved as a signal peptide. 6 consecutive Cadherin domains span residues 30 to 133 (QLHY…APVF), 134 to 242 (PMAV…APAF), 243 to 350 (ERTI…VPEL), 351 to 455 (VIQS…APAF), 456 to 565 (SQSE…APAL), and 581 to 678 (VPRS…APKA). At 30 to 697 (QLHYSVSEEA…GPEAALVDVN (668 aa)) the chain is on the extracellular side. 2 N-linked (GlcNAc...) asparagine glycosylation sites follow: Asn257 and Asn265. N-linked (GlcNAc...) asparagine glycosylation is present at Asn548. Residues 698–718 (VYLIVAICAVSSLLVLTLLLY) form a helical membrane-spanning segment. Over 719-950 (TALRCSAPPT…GNSTTDNSDQ (232 aa)) the chain is Cytoplasmic. 2 PXXP repeats span residues 734 to 737 (PGKP) and 774 to 777 (PSLP). A 6 X 4 AA repeats of P-X-X-P region spans residues 734–894 (PGKPTLVCSS…PDKFIIPGSP (161 aa)). Disordered regions lie at residues 777–806 (PPCP…NPDW), 831–856 (GPGG…EVSP), and 869–950 (FKYG…NSDQ). The span at 782–797 (SRDREEKQDVDVDLSA) shows a compositional bias: basic and acidic residues. PXXP repeat units lie at residues 799–802 (PRQP), 832–835 (PGGP), 873–876 (PGNP), and 891–894 (PGSP). Residues 909-923 (DKSDFITFGKKEETK) are compositionally biased toward basic and acidic residues.

The protein resides in the cell membrane. In terms of biological role, potential calcium-dependent cell-adhesion protein. May be involved in the establishment and maintenance of specific neuronal connections in the brain. The protein is Protocadherin alpha-3 (PCDHA3) of Homo sapiens (Human).